The sequence spans 171 residues: Ribosome maturation factor RimM (171 aa).

One can recognise a PRC barrel domain in the interval 97–170; the sequence is EGEYYYHEII…LVTIHVMEGL (74 aa).

Belongs to the RimM family. As to quaternary structure, binds ribosomal protein uS19.

It is found in the cytoplasm. An accessory protein needed during the final step in the assembly of 30S ribosomal subunit, possibly for assembly of the head region. Essential for efficient processing of 16S rRNA. May be needed both before and after RbfA during the maturation of 16S rRNA. It has affinity for free ribosomal 30S subunits but not for 70S ribosomes. This Bacillus cereus (strain ATCC 14579 / DSM 31 / CCUG 7414 / JCM 2152 / NBRC 15305 / NCIMB 9373 / NCTC 2599 / NRRL B-3711) protein is Ribosome maturation factor RimM.